Here is a 277-residue protein sequence, read N- to C-terminus: Ribosomal RNA small subunit methyltransferase A (277 aa).

S-adenosyl-L-methionine is bound by residues His15, Leu17, Gly42, Glu64, Asp89, and Asn109.

Belongs to the class I-like SAM-binding methyltransferase superfamily. rRNA adenine N(6)-methyltransferase family. RsmA subfamily.

It localises to the cytoplasm. The catalysed reaction is adenosine(1518)/adenosine(1519) in 16S rRNA + 4 S-adenosyl-L-methionine = N(6)-dimethyladenosine(1518)/N(6)-dimethyladenosine(1519) in 16S rRNA + 4 S-adenosyl-L-homocysteine + 4 H(+). Specifically dimethylates two adjacent adenosines (A1518 and A1519) in the loop of a conserved hairpin near the 3'-end of 16S rRNA in the 30S particle. May play a critical role in biogenesis of 30S subunits. This chain is Ribosomal RNA small subunit methyltransferase A, found in Synechococcus sp. (strain CC9311).